Reading from the N-terminus, the 342-residue chain is Probable allantoicase (342 aa).

The protein belongs to the allantoicase family.

It carries out the reaction allantoate + H2O = (S)-ureidoglycolate + urea. The protein operates within nitrogen metabolism; (S)-allantoin degradation; (S)-ureidoglycolate from allantoate (aminidohydrolase route): step 1/1. Functionally, utilization of purines as secondary nitrogen sources, when primary sources are limiting. The sequence is that of Probable allantoicase from Schizosaccharomyces pombe (strain 972 / ATCC 24843) (Fission yeast).